Here is a 521-residue protein sequence, read N- to C-terminus: MTQDKILILDFGSQVTRLIARRVREAHVYCELHSFDMPLDEIKAFNPKGIILSGGPNSVYESDYQADTGIFDLGIPVLGICYGMQFMAHHLGGEVQPGNQREFGYAQVKTIDSGLTRGIQDDAPNTLDVWMSHGDKVSKLPDGFAVIGDTPSCPIAMMENAEKQFYGIQFHPEVTHTKQGRALLNRFVLDICGAQPGWTMPNYIEEAVAKIREQVGSDEVILGLSGGVDSSVAAALIHRAIGDQLTCVFVDHGLLRLNEGKMVMDMFARNLGVKVIHVDAEGQFMAKLAGVTDPEKKRKIIGAEFIEVFDAEEKKLTNAKWLAQGTIYPDVIESAGAKTKKAHAIKSHHNVGGLPENMKLKLLEPLRDLFKDEVRELGVALGLPREMVYRHPFPGPGLGVRILGEVKKEYADLLRQADDIFIQELRNTTDENGTSWYDLTSQAFAVFLPVKSVGVMGDGRTYDYVVALRAVITSDFMTAHWAELPYSLLGRVSNRIINEVKGINRVVYDVSGKPPATIEWE.

In terms of domain architecture, Glutamine amidotransferase type-1 spans 5-197; it reads KILILDFGSQ…VLDICGAQPG (193 aa). The Nucleophile role is filled by Cys81. Catalysis depends on residues His171 and Glu173. The 193-residue stretch at 198–390 folds into the GMPS ATP-PPase domain; sequence WTMPNYIEEA…LGLPREMVYR (193 aa). 225–231 serves as a coordination point for ATP; sequence SGGVDSS.

As to quaternary structure, homodimer.

It carries out the reaction XMP + L-glutamine + ATP + H2O = GMP + L-glutamate + AMP + diphosphate + 2 H(+). The protein operates within purine metabolism; GMP biosynthesis; GMP from XMP (L-Gln route): step 1/1. Functionally, catalyzes the synthesis of GMP from XMP. The protein is GMP synthase [glutamine-hydrolyzing] of Neisseria gonorrhoeae (strain ATCC 700825 / FA 1090).